Here is a 195-residue protein sequence, read N- to C-terminus: Pyridoxal 5'-phosphate synthase subunit PdxT (195 aa).

L-glutamine is bound at residue 46 to 48 (GES). C78 (nucleophile) is an active-site residue. L-glutamine contacts are provided by residues R107 and 136 to 137 (IR). Active-site charge relay system residues include H173 and E175.

The protein belongs to the glutaminase PdxT/SNO family. In the presence of PdxS, forms a dodecamer of heterodimers. Only shows activity in the heterodimer.

The catalysed reaction is aldehydo-D-ribose 5-phosphate + D-glyceraldehyde 3-phosphate + L-glutamine = pyridoxal 5'-phosphate + L-glutamate + phosphate + 3 H2O + H(+). It carries out the reaction L-glutamine + H2O = L-glutamate + NH4(+). Its pathway is cofactor biosynthesis; pyridoxal 5'-phosphate biosynthesis. Its function is as follows. Catalyzes the hydrolysis of glutamine to glutamate and ammonia as part of the biosynthesis of pyridoxal 5'-phosphate. The resulting ammonia molecule is channeled to the active site of PdxS. This Dehalococcoides mccartyi (strain ATCC BAA-2100 / JCM 16839 / KCTC 5957 / BAV1) protein is Pyridoxal 5'-phosphate synthase subunit PdxT.